Here is a 148-residue protein sequence, read N- to C-terminus: UPF0178 protein lpg0089 (148 aa).

Belongs to the UPF0178 family.

The protein is UPF0178 protein lpg0089 of Legionella pneumophila subsp. pneumophila (strain Philadelphia 1 / ATCC 33152 / DSM 7513).